We begin with the raw amino-acid sequence, 417 residues long: MATSIPRSRCFLTSSTLKVVPRSRTPLRSFATTSDTPQTSVPEAPGKRSRPPTSFSDTLNAGPSFGDFVNPNAPLSPTEAYEIKTVQVGPEGRKKTITRLPEWLRTPIPSNANQNYKQIKKDLRGLNLATVCEEARCPNISDCWGGSSKSAATATIMLMGDTCTRGCRFCAVKTSKAPPPLDPHEPENTAEALRRWGLGYVVITVVDRDDLADSGAHHIAETIMKIKQKNPTQLVELLGGDYGGNLEMAKVVARSGVDVFAHNIETTERLTPFVRDRRAKFRQSLDVLRSAKEERPELITKTSMMLGLGETDEDLWHALRELRANNVDVVTFGQYMRPTKRHMAVHDYVTPDKFELWRQRALDMGFLYCASGPLVRSSYKAGEAFIENVLKKRRLGSSAGKNDVAELSAAEEVGKAL.

The N-terminal 30 residues, 1-30, are a transit peptide targeting the mitochondrion; that stretch reads MATSIPRSRCFLTSSTLKVVPRSRTPLRSF. The interval 23 to 62 is disordered; it reads SRTPLRSFATTSDTPQTSVPEAPGKRSRPPTSFSDTLNAG. 2 stretches are compositionally biased toward polar residues: residues 30–41 and 51–61; these read FATTSDTPQTSV and PPTSFSDTLNA. Residues Cys132, Cys137, Cys143, Cys163, Cys167, Cys170, and Ser378 each contribute to the [4Fe-4S] cluster site. Residues 146–367 enclose the Radical SAM core domain; sequence GSSKSAATAT…RQRALDMGFL (222 aa).

The protein belongs to the radical SAM superfamily. Lipoyl synthase family. It depends on [4Fe-4S] cluster as a cofactor.

It localises to the mitochondrion. The enzyme catalyses [[Fe-S] cluster scaffold protein carrying a second [4Fe-4S](2+) cluster] + N(6)-octanoyl-L-lysyl-[protein] + 2 oxidized [2Fe-2S]-[ferredoxin] + 2 S-adenosyl-L-methionine + 4 H(+) = [[Fe-S] cluster scaffold protein] + N(6)-[(R)-dihydrolipoyl]-L-lysyl-[protein] + 4 Fe(3+) + 2 hydrogen sulfide + 2 5'-deoxyadenosine + 2 L-methionine + 2 reduced [2Fe-2S]-[ferredoxin]. It participates in protein modification; protein lipoylation via endogenous pathway; protein N(6)-(lipoyl)lysine from octanoyl-[acyl-carrier-protein]: step 2/2. Its function is as follows. Catalyzes the radical-mediated insertion of two sulfur atoms into the C-6 and C-8 positions of the octanoyl moiety bound to the lipoyl domains of lipoate-dependent enzymes, thereby converting the octanoylated domains into lipoylated derivatives. This Pyrenophora tritici-repentis (strain Pt-1C-BFP) (Wheat tan spot fungus) protein is Lipoyl synthase, mitochondrial.